A 421-amino-acid chain; its full sequence is UDP-N-acetylglucosamine 1-carboxyvinyltransferase (421 aa).

22–23 contributes to the phosphoenolpyruvate binding site; the sequence is KN. Arg-94 lines the UDP-N-acetyl-alpha-D-glucosamine pocket. Residue Cys-118 is the Proton donor of the active site. Cys-118 carries the post-translational modification 2-(S-cysteinyl)pyruvic acid O-phosphothioketal. Residues 163-166, Asp-308, and Ile-330 each bind UDP-N-acetyl-alpha-D-glucosamine; that span reads KVSV.

It belongs to the EPSP synthase family. MurA subfamily.

The protein localises to the cytoplasm. The enzyme catalyses phosphoenolpyruvate + UDP-N-acetyl-alpha-D-glucosamine = UDP-N-acetyl-3-O-(1-carboxyvinyl)-alpha-D-glucosamine + phosphate. The protein operates within cell wall biogenesis; peptidoglycan biosynthesis. Functionally, cell wall formation. Adds enolpyruvyl to UDP-N-acetylglucosamine. The polypeptide is UDP-N-acetylglucosamine 1-carboxyvinyltransferase (Orientia tsutsugamushi (strain Ikeda) (Rickettsia tsutsugamushi)).